We begin with the raw amino-acid sequence, 1359 residues long: Junctional cadherin 5-associated protein (1359 aa).

Disordered regions lie at residues 1–147, 249–411, 454–554, 591–813, 840–1076, 1105–1141, 1157–1207, 1225–1260, and 1276–1359; these read MYSV…SLPV, PLNE…PAHP, NSSP…TCET, SHLP…CNSK, KELQ…TIEI, RAGQNQPAEPDASACTPESPQEELLSRPAPADVPRVS, PLFV…KDVE, SVAGSEKRLRSPSKVIESLQEKLASPPRRADPDRLM, and FRNA…VERV. The span at 15-28 shows a compositional bias: basic and acidic residues; it reads LSRDPPASREDNPK. Composition is skewed to polar residues over residues 82–91 and 98–112; these read PQSTSASRTS and QPPSAWSSHPPTGND. Residues 120 to 135 show a composition bias toward basic and acidic residues; that stretch reads RQEARSQKPREHENLE. Positions 302 to 321 are enriched in low complexity; the sequence is QQSRGGADSSDSQDSQQMDA. Residues 335 to 353 are compositionally biased toward pro residues; the sequence is LEPPVYVPPPSYRSPPQNI. The segment covering 539-554 has biased composition (polar residues); it reads RQVSSPYSQGESTCET. The span at 591–613 shows a compositional bias: basic and acidic residues; it reads SHLPDRDMDNNDLKPSADQKNGS. Polar residues-rich tracts occupy residues 619–632, 689–704, and 756–773; these read LQEQSLLSMSSTDL, QQTQTSFSEEPQSSQL, and LSPSSNSAFSRTSLSVDQ. The segment covering 849–859 has biased composition (low complexity); that stretch reads SSSSSSSSSSS. The segment covering 868-880 has biased composition (basic and acidic residues); sequence QENRAHCRQEDVG. Residues 1003 to 1013 show a composition bias toward polar residues; sequence PKITSAFSSVK. Serine 1044 and serine 1050 each carry phosphoserine. Serine 1194 carries the post-translational modification Phosphoserine. Phosphoserine is present on serine 1281. Positions 1324–1342 are enriched in basic and acidic residues; that stretch reads SISREEKEHPAAQKEKSMD.

It is found in the cell junction. It localises to the adherens junction. In Homo sapiens (Human), this protein is Junctional cadherin 5-associated protein.